Here is a 953-residue protein sequence, read N- to C-terminus: Translation initiation factor IF-2 (953 aa).

2 disordered regions span residues 48 to 248 (SSFS…AELA) and 279 to 363 (TKLK…TERK). Composition is skewed to basic and acidic residues over residues 80 to 89 (TGSEHAEKTQ), 98 to 111 (FKAE…EQAA), and 140 to 188 (QGDK…ENHK). Residues 191-207 (RFTNQKKQGRQEPQSKS) show a composition bias toward polar residues. Over residues 229–248 (RQSETRFRAQQEAKRLAELA) the composition is skewed to basic and acidic residues. Polar residues predominate over residues 282 to 291 (KSSNISAKST). The span at 300–317 (ARPEKNRELTHHSQEGQK) shows a compositional bias: basic and acidic residues. Low complexity predominate over residues 322-338 (SWNSQNQVRNQKNSNWN). Residues 339–348 (KNKKTKKGKN) are compositionally biased toward basic residues. The 170-residue stretch at 454–623 (ERAPVVTIMG…LLVAEVEELK (170 aa)) folds into the tr-type G domain. Positions 463 to 470 (GHVDHGKT) are G1. 463–470 (GHVDHGKT) serves as a coordination point for GTP. Residues 488–492 (GITQH) form a G2 region. Residues 509–512 (DTPG) form a G3 region. Residues 509 to 513 (DTPGH) and 563 to 566 (NKID) each bind GTP. The interval 563–566 (NKID) is G4. Positions 599–601 (SAK) are G5.

This sequence belongs to the TRAFAC class translation factor GTPase superfamily. Classic translation factor GTPase family. IF-2 subfamily.

It localises to the cytoplasm. One of the essential components for the initiation of protein synthesis. Protects formylmethionyl-tRNA from spontaneous hydrolysis and promotes its binding to the 30S ribosomal subunits. Also involved in the hydrolysis of GTP during the formation of the 70S ribosomal complex. The protein is Translation initiation factor IF-2 of Streptococcus pyogenes serotype M18 (strain MGAS8232).